A 188-amino-acid chain; its full sequence is Elongation factor P (188 aa).

It belongs to the elongation factor P family.

The protein localises to the cytoplasm. It participates in protein biosynthesis; polypeptide chain elongation. In terms of biological role, involved in peptide bond synthesis. Stimulates efficient translation and peptide-bond synthesis on native or reconstituted 70S ribosomes in vitro. Probably functions indirectly by altering the affinity of the ribosome for aminoacyl-tRNA, thus increasing their reactivity as acceptors for peptidyl transferase. This chain is Elongation factor P, found in Saccharopolyspora erythraea (strain ATCC 11635 / DSM 40517 / JCM 4748 / NBRC 13426 / NCIMB 8594 / NRRL 2338).